We begin with the raw amino-acid sequence, 330 residues long: Glycerol-3-phosphate dehydrogenase [NAD(P)+] (330 aa).

Trp-11, Arg-31, His-32, and Lys-105 together coordinate NADPH. Sn-glycerol 3-phosphate contacts are provided by Lys-105 and Gly-133. Ala-137 is a binding site for NADPH. Residues Lys-188, Asp-241, Ser-251, Arg-252, and Asn-253 each coordinate sn-glycerol 3-phosphate. Catalysis depends on Lys-188, which acts as the Proton acceptor. Arg-252 is an NADPH binding site. Leu-277 and Glu-279 together coordinate NADPH.

Belongs to the NAD-dependent glycerol-3-phosphate dehydrogenase family.

Its subcellular location is the cytoplasm. It carries out the reaction sn-glycerol 3-phosphate + NAD(+) = dihydroxyacetone phosphate + NADH + H(+). The catalysed reaction is sn-glycerol 3-phosphate + NADP(+) = dihydroxyacetone phosphate + NADPH + H(+). The protein operates within membrane lipid metabolism; glycerophospholipid metabolism. Functionally, catalyzes the reduction of the glycolytic intermediate dihydroxyacetone phosphate (DHAP) to sn-glycerol 3-phosphate (G3P), the key precursor for phospholipid synthesis. The chain is Glycerol-3-phosphate dehydrogenase [NAD(P)+] from Orientia tsutsugamushi (strain Boryong) (Rickettsia tsutsugamushi).